The chain runs to 864 residues: DNA mismatch repair protein MutS (864 aa).

Residue 607-614 (GPNMGGKS) coordinates ATP.

Belongs to the DNA mismatch repair MutS family.

Its function is as follows. This protein is involved in the repair of mismatches in DNA. It is possible that it carries out the mismatch recognition step. This protein has a weak ATPase activity. This chain is DNA mismatch repair protein MutS, found in Neisseria meningitidis serogroup B (strain ATCC BAA-335 / MC58).